We begin with the raw amino-acid sequence, 295 residues long: Origin of replication complex subunit 6 (295 aa).

The tract at residues 212-295 (PSKRKHDDDS…MALEVSSAAN (84 aa)) is disordered. Over residues 220 to 236 (DSDSSGESSGDDQDELD) the composition is skewed to acidic residues. Residues 254–263 (WKSSVLSNKQ) are compositionally biased toward polar residues.

The protein belongs to the ORC6 family. As to quaternary structure, component of the origin recognition complex (ORC) composed of at least ORC1, ORC2, ORC3, ORC4, ORC5 and ORC6. ORC is regulated in a cell-cycle and development dependent manner. It is sequentially assembled at the exit from anaphase of mitosis and disassembled as cells enter S phase.

It is found in the nucleus. Functionally, component of the origin recognition complex (ORC) that binds origins of replication. DNA-binding is ATP-dependent. The specific DNA sequences that define origins of replication have not been identified yet. ORC is required to assemble the pre-replication complex necessary to initiate DNA replication. This Oryza sativa subsp. japonica (Rice) protein is Origin of replication complex subunit 6.